The primary structure comprises 551 residues: MAVCARLCGVGQSGGCRRRQQRKGAGNGPELEDEEEEDEVRIEAEVIGGQAAEAPRRPRSLLHLPPEILVEIFSSLPGTELPSLAQVCRKFRQILTTDTIWKRRCKQEYGVCENLRKLEVTGVSCRDVYVKRINPRVKSGRFMKILPDYEHMEYRDIYTCLLHQYRHILGLWQPDIGPYGGLLNVVVDGLFIIGWMYLPPHDPHVDEAMRLKPVFRIHLMERNDATVECMYGHKGPHNGQIQIVKKDEFSTKCIQTDYHRMSGGRQEEFRTWLREDLGRTLEDIFHEHMQELILMKFIYICQYDNCLTYRRIYHPPSRPDDLLNPGFFKGTYGSHGLEIVMLSFHGTIAKVTKITGDPNVPAGQQTLEVDLTRPVQLPDVEHLRNFDEMSRLILDVQAQIHREQRQTGNEEDDGRGAGPDKAEHSQQPAPVLRPANEDANKVDGGDGEEQKPPNVQSFVLPTGVMARNEEYPRSCKMCFYGTGLIAGHGFSSPERTPGLFILFDEDRFGFIWLELKSFSLYSRMRDRFQQSEAPSVEAFEEMLQNMQSWTT.

The segment at 12–38 is disordered; the sequence is QSGGCRRRQQRKGAGNGPELEDEEEED. The F-box domain occupies 58 to 104; it reads PRSLLHLPPEILVEIFSSLPGTELPSLAQVCRKFRQILTTDTIWKRR. Zn(2+) contacts are provided by cysteine 229, histidine 237, cysteine 253, and histidine 259. Positions 402–459 are disordered; that stretch reads REQRQTGNEEDDGRGAGPDKAEHSQQPAPVLRPANEDANKVDGGDGEEQKPPNVQSFV. 2 stretches are compositionally biased toward basic and acidic residues: residues 414–424 and 435–451; these read GRGAGPDKAEH and ANED…EEQK.

It belongs to the FBXO31 family. In terms of assembly, part of a SCF (SKP1-cullin-F-box) protein ligase complex SCF(FBXO31).

The protein resides in the cytoplasm. Its pathway is protein modification; protein ubiquitination. Substrate-recognition component of the SCF(FBXO31) protein ligase complex, which specifically mediates the ubiquitination of proteins amidated at their C-terminus in response to oxidative stress, leading to their degradation by the proteasome. Fbxo31 specifically recognizes and binds C-terminal peptides bearing an amide: C-terminal amidation in response to oxidative stress takes place following protein fragmentation. The SCF(FBXO31) also plays a role in G1 arrest following DNA damage by mediating ubiquitination of phosphorylated cyclin-D1 (ccnd1), promoting its degradation by the proteasome, resulting in G1 arrest. The SCF(FBXO31) complex is however not a major regulator of ccnd1 stability during the G1/S transition. In Xenopus tropicalis (Western clawed frog), this protein is F-box only protein 31 (fbxo31).